The primary structure comprises 383 residues: S-adenosylmethionine:tRNA ribosyltransferase-isomerase (383 aa).

This sequence belongs to the QueA family. In terms of assembly, monomer.

It localises to the cytoplasm. It carries out the reaction 7-aminomethyl-7-carbaguanosine(34) in tRNA + S-adenosyl-L-methionine = epoxyqueuosine(34) in tRNA + adenine + L-methionine + 2 H(+). Its pathway is tRNA modification; tRNA-queuosine biosynthesis. Its function is as follows. Transfers and isomerizes the ribose moiety from AdoMet to the 7-aminomethyl group of 7-deazaguanine (preQ1-tRNA) to give epoxyqueuosine (oQ-tRNA). This Rickettsia prowazekii (strain Madrid E) protein is S-adenosylmethionine:tRNA ribosyltransferase-isomerase.